A 459-amino-acid chain; its full sequence is Tryptophan synthase beta chain (459 aa).

K121 carries the post-translational modification N6-(pyridoxal phosphate)lysine.

It belongs to the TrpB family. In terms of assembly, tetramer of two alpha and two beta chains. The cofactor is pyridoxal 5'-phosphate.

It carries out the reaction (1S,2R)-1-C-(indol-3-yl)glycerol 3-phosphate + L-serine = D-glyceraldehyde 3-phosphate + L-tryptophan + H2O. It participates in amino-acid biosynthesis; L-tryptophan biosynthesis; L-tryptophan from chorismate: step 5/5. Functionally, the beta subunit is responsible for the synthesis of L-tryptophan from indole and L-serine. The protein is Tryptophan synthase beta chain (trpB) of Pyrococcus horikoshii (strain ATCC 700860 / DSM 12428 / JCM 9974 / NBRC 100139 / OT-3).